The following is a 357-amino-acid chain: Mating-type protein MAT-1 (357 aa).

The alpha box DNA-binding region spans 53–108 (RAKRPLNAFMAFRTYYLKLFPDTQQKNASGFLTQLWGGDPHRNKWALIAKVYSFLR).

The protein belongs to the MATALPHA1 family.

The protein localises to the nucleus. In terms of biological role, mating type proteins are sequence specific DNA-binding proteins that act as master switches in fungal differentiation by controlling gene expression in a cell type-specific fashion. Transcriptional activator that induces the transcription of alpha-specific genes. The sequence is that of Mating-type protein MAT-1 (MAT1) from Fusarium oxysporum (Fusarium vascular wilt).